Here is a 556-residue protein sequence, read N- to C-terminus: Hydroxylamine reductase (556 aa).

Positions 5, 8, 17, and 23 each coordinate [4Fe-4S] cluster. Hybrid [4Fe-2O-2S] cluster contacts are provided by His249, Glu273, Cys317, Cys409, Cys437, Cys462, Glu497, and Lys499. Cys409 is modified (cysteine persulfide).

It belongs to the HCP family. The cofactor is [4Fe-4S] cluster. Hybrid [4Fe-2O-2S] cluster is required as a cofactor.

Its subcellular location is the cytoplasm. The enzyme catalyses A + NH4(+) + H2O = hydroxylamine + AH2 + H(+). Functionally, catalyzes the reduction of hydroxylamine to form NH(3) and H(2)O. This chain is Hydroxylamine reductase, found in Kosmotoga olearia (strain ATCC BAA-1733 / DSM 21960 / TBF 19.5.1).